Here is a 420-residue protein sequence, read N- to C-terminus: 3-phosphoshikimate 1-carboxyvinyltransferase (420 aa).

3-phosphoshikimate contacts are provided by Lys20, Ser21, and Arg25. Residue Lys20 participates in phosphoenolpyruvate binding. Arg119 contacts phosphoenolpyruvate. Ser161, Ser162, Gln163, Ser189, Asp303, Gln326, and Lys330 together coordinate 3-phosphoshikimate. Phosphoenolpyruvate is bound at residue Gln163. Residue Asp303 is the Proton acceptor of the active site. Phosphoenolpyruvate is bound by residues Arg334, Arg375, and Lys400.

It belongs to the EPSP synthase family. As to quaternary structure, monomer.

It localises to the cytoplasm. The enzyme catalyses 3-phosphoshikimate + phosphoenolpyruvate = 5-O-(1-carboxyvinyl)-3-phosphoshikimate + phosphate. Its pathway is metabolic intermediate biosynthesis; chorismate biosynthesis; chorismate from D-erythrose 4-phosphate and phosphoenolpyruvate: step 6/7. Functionally, catalyzes the transfer of the enolpyruvyl moiety of phosphoenolpyruvate (PEP) to the 5-hydroxyl of shikimate-3-phosphate (S3P) to produce enolpyruvyl shikimate-3-phosphate and inorganic phosphate. In Dehalococcoides mccartyi (strain ATCC BAA-2266 / KCTC 15142 / 195) (Dehalococcoides ethenogenes (strain 195)), this protein is 3-phosphoshikimate 1-carboxyvinyltransferase.